The sequence spans 1322 residues: MVSARYPIEKWSRPQLEDHFHNVVEELNKAQKKVKEQEKQITTFNSRFRRSMLERKSQNEKVVERSKYDDVVKENQILDMKLKAAKQQLLIYTAPSARATTASMMTGRSTFRQPPSTFRQRPPLTAGTTGSIDRPGSAPVARKKSDGGEKLQLATDEKLAIVRLNRTLKNKNDEITELKYTIEKLRQLKSSVNQSSPPTRLSTSSSSKSSSSNNNNDGEGKDSELEEMSEMSDDESGRSTPVIEEKKKPRRKSRKSSHQEPSKNPIPPPRIPDQTEKVLLDKLKVAENDLAMLQEECDLVKKANERLVHQSLSKSTEYGARESIEEKKKIVELEELLKETEKRIKESEHRRREDQKKFEAMRLHYKNKYDAAKKTEKKLSVVAKNSKVEEERIEEEKISHSPPPMTFEPIRKRHSQSEISRMRRADDDLLQKLYKEVADILHSHDVGIAEINTLGASENSLARWQKLYSELYEELEKVRNMLLIQYDINQKQMKEIKLLKDELDRLKTVSAEILSKSREEVEERQKKIFMLEEQIRTIAYSGQQPVKLLANQINIPTPRVNTDLSVKLINVKPSPSLTSKFFFSLEFFDFQLETTPIMDAKQHNMDFTTVYDVLVSNLLIHYLQTNGIVIEMYRPASDCYKLLAAATISLIPLFEDSVLRKFCSEIMLKSVDTGVEMCTLRYEIEVSQPISDSFKKFKKSEMARNMLPLQLENEDTEDTNFDPLTIMVNRVVGLDTFGKDPSTEFCIVDEFLSFSPYFTDFSTSSEIRSKRDCYIPKIDIARNLFATSSISFFLIENIPRQDGVIATLHLPLHPLCKLGGSIKGTFPMLDTDGRPSSVSLDLCLIWKHEIPSFFLKHEPKEPLKEVKDTPILPQPVRRTSKEFVVTPVKEAELHDAEPTSMPPKAPEPTTAPLRRLSTDSSDTSFSHSSKDLFSPPTNPQTYDYEIPAVTPALVDSDGEEEADRIVFDDDDDEIESVSAVSSQRDPEPLEVPERQVENLPSPEDTPRPSDPLKPNGTNESKESTPVTQRSVDKTDDVAPVDPELEPESGPEPEPVVESEPNEVAETEEDRKRELKTEELKSLLGALPPIAKPRNIPVGPIALTEQPEATRQQGSTGRILFTDPLHFSVPPSESSSTSSPRRAEKAPVPLPDYEGHSLIKVRKPLSPTDKDVLEPNMKVSIQLETFELVPGSSLTPLTREETTFFVDWVFLDFTNEQSKSTIFDFPRRPQEMVDIRYTKEYTLTRGQLSLLDQWIRASIKFELTIIKISPGDEEELGFGSLILVPNNTQNKSFVIDVYDRSGIVQAEMTLTLHFSRALIEQLT.

Positions 1-22 are cleaved as a signal peptide; sequence MVSARYPIEKWSRPQLEDHFHN. Residues 15 to 89 are a coiled coil; that stretch reads QLEDHFHNVV…MKLKAAKQQL (75 aa). Positions 108 to 119 are enriched in polar residues; sequence RSTFRQPPSTFR. Disordered regions lie at residues 108–151, 189–275, and 392–418; these read RSTF…GEKL, KSSV…PDQT, and RIEEEKISHSPPPMTFEPIRKRHSQSE. Residues 195 to 217 show a composition bias toward low complexity; sequence SSPPTRLSTSSSSKSSSSNNNND. The span at 224-234 shows a compositional bias: acidic residues; that stretch reads ELEEMSEMSDD. Positions 274-362 form a coiled coil; the sequence is QTEKVLLDKL…EDQKKFEAMR (89 aa). A coiled-coil region spans residues 456–538; sequence ASENSLARWQ…FMLEEQIRTI (83 aa). Disordered stretches follow at residues 891-1094 and 1121-1149; these read AELH…KPRN and TDPLHFSVPPSESSSTSSPRRAEKAPVPL. The segment covering 918 to 927 has biased composition (low complexity); the sequence is TDSSDTSFSH. Positions 956 to 975 are enriched in acidic residues; the sequence is SDGEEEADRIVFDDDDDEIE. The span at 984–996 shows a compositional bias: basic and acidic residues; that stretch reads RDPEPLEVPERQV. The span at 1015 to 1029 shows a compositional bias: polar residues; that stretch reads NGTNESKESTPVTQR. The segment covering 1042 to 1067 has biased composition (acidic residues); sequence PELEPESGPEPEPVVESEPNEVAETE. The span at 1068–1080 shows a compositional bias: basic and acidic residues; that stretch reads EDRKRELKTEELK. Positions 1127-1139 are enriched in low complexity; that stretch reads SVPPSESSSTSSP.

This sequence belongs to the RPGRIP1 family. In terms of tissue distribution, expressed at the transition zone at the base of cilia. Expressed in ciliated sensory neurons, including the amphid neurons in the head.

It localises to the cell projection. The protein localises to the cilium. Thought to have an important role in cilia formation and cilia-mediated chemosensation. Involved in the docking of other MKS/MKSR proteins localized to the transition zone of the cilia. The chain is Protein fantom (mks-5) from Caenorhabditis elegans.